The following is a 421-amino-acid chain: Probable cysteine desulfurase (421 aa).

The residue at position 242 (Lys242) is an N6-(pyridoxal phosphate)lysine.

It belongs to the class-V pyridoxal-phosphate-dependent aminotransferase family. Csd subfamily. It depends on pyridoxal 5'-phosphate as a cofactor.

The enzyme catalyses (sulfur carrier)-H + L-cysteine = (sulfur carrier)-SH + L-alanine. Catalyzes the removal of elemental sulfur and selenium atoms from L-cysteine, L-cystine, L-selenocysteine, and L-selenocystine to produce L-alanine. This Pasteurella multocida (strain Pm70) protein is Probable cysteine desulfurase (csd).